We begin with the raw amino-acid sequence, 23 residues long: Lycosin-II (23 aa).

Leu21 carries the post-translational modification Leucine amide.

Expressed by the venom gland.

The protein resides in the secreted. The protein localises to the target cell membrane. Functionally, has strong antibacterial activity and biofilm inhibition effects against Gram-positive and -negative bacteria including E.coli, S.epidermidis, and A.baumannii and oxacillin-resistant S.aureus and meropenem-resistant P.aeruginosa. Is not cytotoxic against human foreskin fibroblast Hs27 or hemolytic against mammalian red blood cells. Its mechanism of action involves binding to lipoteichoic acid and lipopolysaccharide of Gram-positive and Gram-negative bacterial membranes, respectively, to destroy the bacterial membrane. In addition, it shows anti-inflammatory effects by inhibiting the expression of pro-inflammatory cytokines that are increased during bacterial infection in Hs27 cells. The polypeptide is Lycosin-II (Lycosa singoriensis (Wolf spider)).